The chain runs to 267 residues: Undecaprenyl-diphosphatase (267 aa).

Helical transmembrane passes span 1-21 (MTLW…FLPI), 39-59 (AGVA…LFYY), 85-105 (AKLG…GFMV), 117-137 (LLIA…DFWG), 189-209 (FSFL…LWKL), 220-240 (LIAL…ALFI), and 246-266 (VGMM…FFVF).

This sequence belongs to the UppP family.

The protein resides in the cell inner membrane. It carries out the reaction di-trans,octa-cis-undecaprenyl diphosphate + H2O = di-trans,octa-cis-undecaprenyl phosphate + phosphate + H(+). Functionally, catalyzes the dephosphorylation of undecaprenyl diphosphate (UPP). Confers resistance to bacitracin. The polypeptide is Undecaprenyl-diphosphatase (Dichelobacter nodosus (strain VCS1703A)).